Here is a 451-residue protein sequence, read N- to C-terminus: Phosphoglucosamine mutase (451 aa).

S102 acts as the Phosphoserine intermediate in catalysis. Mg(2+)-binding residues include S102, D242, D244, and D246. Position 102 is a phosphoserine (S102).

This sequence belongs to the phosphohexose mutase family. Mg(2+) is required as a cofactor. In terms of processing, activated by phosphorylation.

It carries out the reaction alpha-D-glucosamine 1-phosphate = D-glucosamine 6-phosphate. Functionally, catalyzes the conversion of glucosamine-6-phosphate to glucosamine-1-phosphate. The polypeptide is Phosphoglucosamine mutase (Staphylococcus carnosus (strain TM300)).